The chain runs to 466 residues: 3-isopropylmalate dehydratase large subunit (466 aa).

Residues Cys-347, Cys-407, and Cys-410 each coordinate [4Fe-4S] cluster.

This sequence belongs to the aconitase/IPM isomerase family. LeuC type 1 subfamily. Heterodimer of LeuC and LeuD. [4Fe-4S] cluster serves as cofactor.

It catalyses the reaction (2R,3S)-3-isopropylmalate = (2S)-2-isopropylmalate. The protein operates within amino-acid biosynthesis; L-leucine biosynthesis; L-leucine from 3-methyl-2-oxobutanoate: step 2/4. Catalyzes the isomerization between 2-isopropylmalate and 3-isopropylmalate, via the formation of 2-isopropylmaleate. This Vibrio vulnificus (strain YJ016) protein is 3-isopropylmalate dehydratase large subunit.